The primary structure comprises 101 residues: NAD(P)H-quinone oxidoreductase subunit 4L, chloroplastic (101 aa).

3 helical membrane passes run 2–22 (ILEH…YGLI), 32–52 (MCLE…SDFF), and 61–81 (IFCI…LAIV).

This sequence belongs to the complex I subunit 4L family. In terms of assembly, NDH is composed of at least 16 different subunits, 5 of which are encoded in the nucleus.

The protein resides in the plastid. It localises to the chloroplast thylakoid membrane. The catalysed reaction is a plastoquinone + NADH + (n+1) H(+)(in) = a plastoquinol + NAD(+) + n H(+)(out). The enzyme catalyses a plastoquinone + NADPH + (n+1) H(+)(in) = a plastoquinol + NADP(+) + n H(+)(out). In terms of biological role, NDH shuttles electrons from NAD(P)H:plastoquinone, via FMN and iron-sulfur (Fe-S) centers, to quinones in the photosynthetic chain and possibly in a chloroplast respiratory chain. The immediate electron acceptor for the enzyme in this species is believed to be plastoquinone. Couples the redox reaction to proton translocation, and thus conserves the redox energy in a proton gradient. The chain is NAD(P)H-quinone oxidoreductase subunit 4L, chloroplastic from Crucihimalaya wallichii (Rock-cress).